A 131-amino-acid chain; its full sequence is MSAKTEEILESLKSLSLLEASELVKQIEEAFGVSAAASAGVVMAAPGAAGGDADGGAAEEKTEFDVVLESFDAAAKIKVLKVVRNATGLGLGDAKALVESAPKTVKEGIAKADAESLKKEIEEAGGKVTLK.

This sequence belongs to the bacterial ribosomal protein bL12 family. Homodimer. Part of the ribosomal stalk of the 50S ribosomal subunit. Forms a multimeric L10(L12)X complex, where L10 forms an elongated spine to which 2 to 4 L12 dimers bind in a sequential fashion. Binds GTP-bound translation factors.

Forms part of the ribosomal stalk which helps the ribosome interact with GTP-bound translation factors. Is thus essential for accurate translation. The sequence is that of Large ribosomal subunit protein bL12 from Prochlorococcus marinus (strain MIT 9301).